The sequence spans 212 residues: uncharacterized protein (212 aa).

2 disordered regions span residues 1 to 25 (MARK…GRPN) and 165 to 212 (STSG…HWGG). The span at 202-212 (RSSSARGHWGG) shows a compositional bias: low complexity.

This is an uncharacterized protein from Escherichia coli (strain K12).